The sequence spans 127 residues: MSKASYVKFEVPQDLADKVLEAVRKAKESGKIKKGTNETTKAVERGQAKLVVIAEDVQPEEIVAHLPLLCDEKKIPYVYVSSKKALGEACGLQVATASAAILEPGEAKDLVDEIVKRVNEIKGKTSS.

The protein belongs to the eukaryotic ribosomal protein eL8 family. In terms of assembly, part of the 50S ribosomal subunit. Probably part of the RNase P complex.

The protein resides in the cytoplasm. Its function is as follows. Multifunctional RNA-binding protein that recognizes the K-turn motif in ribosomal RNA, the RNA component of RNase P, box H/ACA, box C/D and box C'/D' sRNAs. In Saccharolobus islandicus (strain Y.N.15.51 / Yellowstone #2) (Sulfolobus islandicus), this protein is Large ribosomal subunit protein eL8.